The sequence spans 569 residues: 3-oxosteroid 1-dehydrogenase (569 aa).

An FAD-binding site is contributed by 10-39 (DVVVVGSGAAGMVAALTAAHQGLSTVVVEK). Residues 127–148 (PGGKPTGRSVEPKPFDANKLGP) form a disordered region.

It belongs to the FAD-dependent oxidoreductase 2 family. 3-oxosteroid dehydrogenase subfamily. It depends on FAD as a cofactor.

The enzyme catalyses a 3-oxosteroid + A = a 3-oxo-Delta(1)-steroid + AH2. It catalyses the reaction a 3-oxo-Delta(4)-steroid + A = a 3-oxo-Delta(1,4)-steroid + AH2. In terms of biological role, catalyzes the elimination of the C-1 and C-2 hydrogen atoms of the A-ring from the polycyclic ring structure of 3-ketosteroids. Is also involved in the formation of 1,4-androstadiene-3,17-dione (ADD) from 4-androstene-3,17-dione (AD) to. This chain is 3-oxosteroid 1-dehydrogenase (ksdD), found in Mycolicibacterium smegmatis (strain ATCC 700084 / mc(2)155) (Mycobacterium smegmatis).